Here is a 339-residue protein sequence, read N- to C-terminus: Large ribosomal subunit protein uL10 (339 aa).

The interval Thr-305–Gly-339 is disordered. A compositionally biased stretch (acidic residues) spans Lys-312–Ala-330.

The protein belongs to the universal ribosomal protein uL10 family. As to quaternary structure, part of the 50S ribosomal subunit. Forms part of the ribosomal stalk which helps the ribosome interact with GTP-bound translation factors. Forms a heptameric L10(L12)2(L12)2(L12)2 complex, where L10 forms an elongated spine to which the L12 dimers bind in a sequential fashion.

Its function is as follows. Forms part of the ribosomal stalk, playing a central role in the interaction of the ribosome with GTP-bound translation factors. In Thermococcus onnurineus (strain NA1), this protein is Large ribosomal subunit protein uL10.